The chain runs to 96 residues: Co-chaperonin GroES (96 aa).

The protein belongs to the GroES chaperonin family. Heptamer of 7 subunits arranged in a ring. Interacts with the chaperonin GroEL.

It is found in the cytoplasm. Its function is as follows. Together with the chaperonin GroEL, plays an essential role in assisting protein folding. The GroEL-GroES system forms a nano-cage that allows encapsulation of the non-native substrate proteins and provides a physical environment optimized to promote and accelerate protein folding. GroES binds to the apical surface of the GroEL ring, thereby capping the opening of the GroEL channel. The chain is Co-chaperonin GroES from Actinobacillus pleuropneumoniae serotype 3 (strain JL03).